The sequence spans 328 residues: Porphobilinogen deaminase (328 aa).

Residue cysteine 245 is modified to S-(dipyrrolylmethanemethyl)cysteine.

Belongs to the HMBS family. As to quaternary structure, monomer. It depends on dipyrromethane as a cofactor.

The catalysed reaction is 4 porphobilinogen + H2O = hydroxymethylbilane + 4 NH4(+). The protein operates within porphyrin-containing compound metabolism; protoporphyrin-IX biosynthesis; coproporphyrinogen-III from 5-aminolevulinate: step 2/4. It functions in the pathway porphyrin-containing compound metabolism; chlorophyll biosynthesis. Its function is as follows. Tetrapolymerization of the monopyrrole PBG into the hydroxymethylbilane pre-uroporphyrinogen in several discrete steps. This Gloeobacter violaceus (strain ATCC 29082 / PCC 7421) protein is Porphobilinogen deaminase.